A 209-amino-acid chain; its full sequence is Large ribosomal subunit protein uL3 (209 aa).

Residues 117-142 (FQGPIKRHGQSRGPETHGSRYHRRPG) are disordered.

It belongs to the universal ribosomal protein uL3 family. In terms of assembly, part of the 50S ribosomal subunit. Forms a cluster with proteins L14 and L19.

Its function is as follows. One of the primary rRNA binding proteins, it binds directly near the 3'-end of the 23S rRNA, where it nucleates assembly of the 50S subunit. In Clostridioides difficile (strain 630) (Peptoclostridium difficile), this protein is Large ribosomal subunit protein uL3.